The following is a 313-amino-acid chain: Alpha-S1-casein (313 aa).

Residues 1–15 (MKLLILTCLVAAAFA) form the signal peptide. Positions 77 to 96 (ASEEQAMASAQEDSSISSSS) are enriched in low complexity. The interval 77–111 (ASEEQAMASAQEDSSISSSSEESEEAIPNITEQKN) is disordered. A phosphoserine mark is found at Ser90, Ser91, Ser93, Ser94, Ser95, and Ser96. 15 tandem repeats follow at residues 135 to 140 (LLQKAS), 141 to 146 (LAKQAS), 147 to 152 (LFQQPS), 153 to 158 (LVQQAS), 159 to 164 (LFQQPS), 165 to 170 (LLQQAS), 171 to 176 (LFQQPS), 177 to 182 (MAQQAS), 183 to 188 (LLQQLL), 189 to 194 (LAQQPS), 195 to 200 (LALQVS), 201 to 206 (PAQQSS), 207 to 212 (LVQQAF), 213 to 218 (LAQQAS), and 219 to 224 (LAQKHH). Positions 135-224 (LLQKASLAKQ…QQASLAQKHH (90 aa)) are 15 X 6 AA tandem repeats.

The protein belongs to the alpha-casein family. Mammary gland specific. Secreted in milk.

The protein localises to the secreted. Its function is as follows. Important role in the capacity of milk to transport calcium phosphate. This Mus musculus (Mouse) protein is Alpha-S1-casein (Csn1s1).